The sequence spans 70 residues: ATP synthase subunit epsilon, mitochondrial (70 aa).

The protein belongs to the eukaryotic ATPase epsilon family. F-type ATPases have 2 components, CF(1) - the catalytic core - and CF(0) - the membrane proton channel. CF(1) has five subunits: alpha(3), beta(3), gamma(1), delta(1), epsilon(1). CF(0) has three main subunits: a, b and c.

The protein localises to the mitochondrion. The protein resides in the mitochondrion inner membrane. In terms of biological role, mitochondrial membrane ATP synthase (F(1)F(0) ATP synthase or Complex V) produces ATP from ADP in the presence of a proton gradient across the membrane which is generated by electron transport complexes of the respiratory chain. F-type ATPases consist of two structural domains, F(1) - containing the extramembraneous catalytic core, and F(0) - containing the membrane proton channel, linked together by a central stalk and a peripheral stalk. During catalysis, ATP synthesis in the catalytic domain of F(1) is coupled via a rotary mechanism of the central stalk subunits to proton translocation. Part of the complex F(1) domain and of the central stalk which is part of the complex rotary element. Rotation of the central stalk against the surrounding alpha(3)beta(3) subunits leads to hydrolysis of ATP in three separate catalytic sites on the beta subunits. This chain is ATP synthase subunit epsilon, mitochondrial, found in Ipomoea batatas (Sweet potato).